A 126-amino-acid polypeptide reads, in one-letter code: Phosphoribosyl-ATP pyrophosphatase (126 aa).

This sequence belongs to the PRA-PH family.

The protein resides in the cytoplasm. The catalysed reaction is 1-(5-phospho-beta-D-ribosyl)-ATP + H2O = 1-(5-phospho-beta-D-ribosyl)-5'-AMP + diphosphate + H(+). Its pathway is amino-acid biosynthesis; L-histidine biosynthesis; L-histidine from 5-phospho-alpha-D-ribose 1-diphosphate: step 2/9. This is Phosphoribosyl-ATP pyrophosphatase from Variovorax paradoxus (strain S110).